The chain runs to 277 residues: Caspase-6 (277 aa).

A propeptide spanning residues 1–5 is cleaved from the precursor; it reads MTETD. The interval 25 to 27 is tri-arginine exosite; it reads KRR. At Ser-62 the chain carries Phosphoserine. Residue His-104 is part of the active site. Positions 108-125 are 130's region; the sequence is NHIYAYDAKIEIQTLTGL. Residue Cys-146 is part of the active site. The propeptide occupies 163–176; sequence HQTDKLDDNVTQVD. Residue Ser-240 is modified to Phosphoserine. S-palmitoyl cysteine attachment occurs at residues Cys-247 and Cys-260.

This sequence belongs to the peptidase C14A family. In terms of assembly, heterotetramer that consists of two anti-parallel arranged heterodimers, each one formed by a 18 kDa (p18) and a 11 kDa (p11) subunits. Interacts with BIRC6/bruce. Interacts with RIPK3. As to quaternary structure, heterotetramer that consists of two anti-parallel arranged heterodimers, each one formed by a 18 kDa (Caspase-6 subunit p18) and a 11 kDa (Caspase-6 subunit p11) subunit. Post-translationally, phosphorylated by NUAK1; phosphorylation inhibits self-activation. Phosphorylation at Ser-240 by AMP-activated protein kinase (PRKAA1 or PRKAA2) inhibits autocleavage, preventing caspase activation, thereby preventing hepatocyte apoptosis. In terms of processing, palmitoylation by ZDHHC17 blocks dimerization and subsequent activation, leading to inhibit the cysteine protease activity. Can be cleaved and activated by different caspases, depending on the context. Cleaved and activated by caspase-8 (CASP8) and subsequently by caspase-3 (CASP3). Can also undergo autoactivation by mediating autocleavage at Asp-162 and Asp-176, while it is not able to cleave its N-terminal disordered prodomain. Cleaved and activated by CASP1, possibly in the context of inflammation.

The protein localises to the cytoplasm. It localises to the nucleus. The enzyme catalyses Strict requirement for Asp at position P1 and has a preferred cleavage sequence of Val-Glu-His-Asp-|-.. With respect to regulation, during activation, the N-terminal disordered prodomain is removed by cleavage. Concomitantly, double cleavage gives rise to a large 18-kDa and a small 11-kDa subunit. The two large and two small subunits then assemble to form the active CASP6 complex. Can be cleaved and activated by different caspases, depending on the context. Cleaved and activated by caspase-8 (CASP8) and subsequently by caspase-3 (CASP3). Can also undergo autoactivation by mediating autocleavage at Asp-162 and Asp-176, while it is not able to cleave its N-terminal disordered prodomain. Intramolecular cleavage at Asp-176 is a prerequisite for CASP6 self-activation. Cleaved and activated by CASP1 in neurons, possibly in the context of inflammation. Phosphorylation at Ser-240 inhibits autocleavage, preventing caspase activation. Its function is as follows. Cysteine protease that plays essential roles in programmed cell death, axonal degeneration, development and innate immunity. Acts as a non-canonical executioner caspase during apoptosis: localizes in the nucleus and cleaves the nuclear structural protein NUMA1 and lamin A/LMNA thereby inducing nuclear shrinkage and fragmentation. Lamin-A/LMNA cleavage is required for chromatin condensation and nuclear disassembly during apoptotic execution. Acts as a regulator of liver damage by promoting hepatocyte apoptosis: in absence of phosphorylation by AMP-activated protein kinase (AMPK), catalyzes cleavage of BID, leading to cytochrome c release, thereby participating in nonalcoholic steatohepatitis. Cleaves PARK7/DJ-1 in cells undergoing apoptosis. Involved in intrinsic apoptosis by mediating cleavage of RIPK1. Furthermore, cleaves many transcription factors such as NF-kappa-B and cAMP response element-binding protein/CREBBP. Cleaves phospholipid scramblase proteins XKR4 and XKR9. In addition to apoptosis, involved in different forms of programmed cell death. Plays an essential role in defense against viruses by acting as a central mediator of the ZBP1-mediated pyroptosis, apoptosis, and necroptosis (PANoptosis), independently of its cysteine protease activity. PANoptosis is a unique inflammatory programmed cell death, which provides a molecular scaffold that allows the interactions and activation of machinery required for inflammasome/pyroptosis, apoptosis and necroptosis. Mechanistically, interacts with RIPK3 and enhances the interaction between RIPK3 and ZBP1, leading to ZBP1-mediated inflammasome activation and cell death. Plays an essential role in axon degeneration during axon pruning which is the remodeling of axons during neurogenesis but not apoptosis. Regulates B-cell programs both during early development and after antigen stimulation. The polypeptide is Caspase-6 (Rattus norvegicus (Rat)).